The sequence spans 71 residues: Large ribosomal subunit protein bL31 (71 aa).

The protein belongs to the bacterial ribosomal protein bL31 family. Type A subfamily. Part of the 50S ribosomal subunit.

Functionally, binds the 23S rRNA. The protein is Large ribosomal subunit protein bL31 of Metamycoplasma arthritidis (strain 158L3-1) (Mycoplasma arthritidis).